Here is a 623-residue protein sequence, read N- to C-terminus: UvrABC system protein C (623 aa).

The 80-residue stretch at 13 to 92 (DKPGVYIMKN…IKKYKPRYNI (80 aa)) folds into the GIY-YIG domain. A UVR domain is found at 204–239 (NDIIRELKEEMEKASMNLDFEKAADLRDKMLAAQKV).

This sequence belongs to the UvrC family. In terms of assembly, interacts with UvrB in an incision complex.

It localises to the cytoplasm. In terms of biological role, the UvrABC repair system catalyzes the recognition and processing of DNA lesions. UvrC both incises the 5' and 3' sides of the lesion. The N-terminal half is responsible for the 3' incision and the C-terminal half is responsible for the 5' incision. The sequence is that of UvrABC system protein C from Clostridium acetobutylicum (strain ATCC 824 / DSM 792 / JCM 1419 / IAM 19013 / LMG 5710 / NBRC 13948 / NRRL B-527 / VKM B-1787 / 2291 / W).